A 504-amino-acid chain; its full sequence is 2,3-bisphosphoglycerate-independent phosphoglycerate mutase (504 aa).

Mn(2+) is bound by residues Asp-11 and Ser-61. The Phosphoserine intermediate role is filled by Ser-61. Substrate contacts are provided by residues His-122, 152 to 153 (RD), Arg-183, Arg-189, 255 to 258 (RNDR), and Lys-329. Mn(2+) contacts are provided by Asp-396, His-400, Asp-437, His-438, and His-455.

It belongs to the BPG-independent phosphoglycerate mutase family. As to quaternary structure, monomer. Mn(2+) serves as cofactor.

It carries out the reaction (2R)-2-phosphoglycerate = (2R)-3-phosphoglycerate. It participates in carbohydrate degradation; glycolysis; pyruvate from D-glyceraldehyde 3-phosphate: step 3/5. In terms of biological role, catalyzes the interconversion of 2-phosphoglycerate and 3-phosphoglycerate. The protein is 2,3-bisphosphoglycerate-independent phosphoglycerate mutase of Bacteroides fragilis (strain ATCC 25285 / DSM 2151 / CCUG 4856 / JCM 11019 / LMG 10263 / NCTC 9343 / Onslow / VPI 2553 / EN-2).